The sequence spans 485 residues: Peptidyl-prolyl isomerase CWC27 (485 aa).

Positions 11 to 167 (SSGLVDLVTS…YPIKLHEVRV (157 aa)) constitute a PPIase cyclophilin-type domain. Residues 173-485 (DDLQPRTTKK…PQQRRQRSII (313 aa)) form a disordered region. 2 stretches are compositionally biased toward basic and acidic residues: residues 184–204 (RIAEERRKKHEMETRVAEEQK) and 236–247 (SSHDLLKDDKHL). Polar residues-rich tracts occupy residues 249 to 270 (RQTIETSKSTKANTPAVSANIS), 278 to 292 (AQSSSSTTPPAVTKQ), 315 to 325 (PSDQKASSSTG), and 353 to 370 (ALLSFQSRLRTRPSSTTP). A compositionally biased stretch (acidic residues) spans 381-398 (DEVEEEAGEYGASDDDDD). Positions 428–465 (LDPRDHTDRERNPKAESSRDGKRGRDWVEHDRKYQNDR) are enriched in basic and acidic residues. The span at 466–485 (SRRHREHDKHPQQRRQRSII) shows a compositional bias: basic residues.

It belongs to the cyclophilin-type PPIase family. CWC27 subfamily. Associated with the spliceosome.

It localises to the cytoplasm. It is found in the nucleus. It carries out the reaction [protein]-peptidylproline (omega=180) = [protein]-peptidylproline (omega=0). Functionally, PPIases accelerate the folding of proteins. It catalyzes the cis-trans isomerization of proline imidic peptide bonds in oligopeptides. Involved in pre-mRNA splicing. This Mycosarcoma maydis (Corn smut fungus) protein is Peptidyl-prolyl isomerase CWC27 (CWC27).